The primary structure comprises 246 residues: tRNA (guanine-N(7)-)-methyltransferase (246 aa).

Residues 1–23 are disordered; it reads MIESSSPTPPALHEGAPADVSHP. 4 residues coordinate S-adenosyl-L-methionine: E75, E100, D127, and D150. Residue D150 is part of the active site. K154 lines the substrate pocket. Positions 156–161 are interaction with RNA; that stretch reads KHNKRR. Substrate is bound by residues D186 and 225-228; that span reads TKFE.

It belongs to the class I-like SAM-binding methyltransferase superfamily. TrmB family.

It carries out the reaction guanosine(46) in tRNA + S-adenosyl-L-methionine = N(7)-methylguanosine(46) in tRNA + S-adenosyl-L-homocysteine. Its pathway is tRNA modification; N(7)-methylguanine-tRNA biosynthesis. Its function is as follows. Catalyzes the formation of N(7)-methylguanine at position 46 (m7G46) in tRNA. The protein is tRNA (guanine-N(7)-)-methyltransferase of Polaromonas naphthalenivorans (strain CJ2).